The following is a 206-amino-acid chain: GTP cyclohydrolase 1 (206 aa).

Residues 1 to 17 (MDAVTPKKDIPRPDSVR) show a composition bias toward basic and acidic residues. The disordered stretch occupies residues 1–23 (MDAVTPKKDIPRPDSVRRPSQQE). The Zn(2+) site is built by Cys95, His98, and Cys166.

Belongs to the GTP cyclohydrolase I family. Toroid-shaped homodecamer, composed of two pentamers of five dimers.

It carries out the reaction GTP + H2O = 7,8-dihydroneopterin 3'-triphosphate + formate + H(+). It functions in the pathway cofactor biosynthesis; 7,8-dihydroneopterin triphosphate biosynthesis; 7,8-dihydroneopterin triphosphate from GTP: step 1/1. The protein is GTP cyclohydrolase 1 of Hyphomonas neptunium (strain ATCC 15444).